A 504-amino-acid chain; its full sequence is Carnosic acid synthase (504 aa).

The chain crosses the membrane as a helical span at residues 4 to 24; the sequence is FIILSLAFIAAWVVYSRWSEY. Residue Cys447 participates in heme binding.

This sequence belongs to the cytochrome P450 family. Heme serves as cofactor. As to expression, expressed in glandular trichomes of young leaves.

Its subcellular location is the membrane. The catalysed reaction is 11-hydroxyferruginol + 3 reduced [NADPH--hemoprotein reductase] + 3 O2 = carnosate + 3 oxidized [NADPH--hemoprotein reductase] + 4 H2O + 4 H(+). It carries out the reaction miltiradiene + 2 reduced [NADPH--hemoprotein reductase] + 2 O2 = miltiradien-20-al + 2 oxidized [NADPH--hemoprotein reductase] + 3 H2O + 2 H(+). It catalyses the reaction ferruginol + 3 reduced [NADPH--hemoprotein reductase] + 3 O2 = pisiferate + 3 oxidized [NADPH--hemoprotein reductase] + 4 H2O + 4 H(+). It participates in secondary metabolite biosynthesis; terpenoid biosynthesis. Monooxygenase involved in the biosynthesis of carnosate, a potent antioxidant labdane-related diterpene natural products. Catalyzes the oxidation of 11-hydroxyferruginol to produce carnosate. Mediates the conversion of miltiradien into miltiradien-20-al. Also involved in the production of pisiferic acid and derivative products from ferruginol. In Rosmarinus officinalis (Rosemary), this protein is Carnosic acid synthase.